Reading from the N-terminus, the 90-residue chain is Putative regulatory protein Cbei_1140 (90 aa).

It belongs to the RemA family.

The polypeptide is Putative regulatory protein Cbei_1140 (Clostridium beijerinckii (strain ATCC 51743 / NCIMB 8052) (Clostridium acetobutylicum)).